Consider the following 77-residue polypeptide: Acyl carrier protein (77 aa).

The Carrier domain maps to 2-77; sequence SDVAKRVKEI…DAIDYITEHT (76 aa). Serine 37 is subject to O-(pantetheine 4'-phosphoryl)serine.

It belongs to the acyl carrier protein (ACP) family. Post-translationally, 4'-phosphopantetheine is transferred from CoA to a specific serine of apo-ACP by AcpS. This modification is essential for activity because fatty acids are bound in thioester linkage to the sulfhydryl of the prosthetic group.

Its subcellular location is the cytoplasm. Its pathway is lipid metabolism; fatty acid biosynthesis. In terms of biological role, carrier of the growing fatty acid chain in fatty acid biosynthesis. The polypeptide is Acyl carrier protein (Trichlorobacter lovleyi (strain ATCC BAA-1151 / DSM 17278 / SZ) (Geobacter lovleyi)).